Reading from the N-terminus, the 146-residue chain is Transcriptional regulator MraZ (146 aa).

SpoVT-AbrB domains lie at 5 to 51 and 80 to 123; these read NHPT…PLQE and GQMV…NHEA.

This sequence belongs to the MraZ family. Forms oligomers.

The protein resides in the cytoplasm. The protein localises to the nucleoid. This Acidobacterium capsulatum (strain ATCC 51196 / DSM 11244 / BCRC 80197 / JCM 7670 / NBRC 15755 / NCIMB 13165 / 161) protein is Transcriptional regulator MraZ.